A 386-amino-acid chain; its full sequence is Benzoyl-CoA reductase subunit C (386 aa).

Belongs to the FldB/FldC dehydratase alpha/beta subunit family. In terms of assembly, heterotetramer composed of A, B, C, and D subunits. Iron-sulfur cluster is required as a cofactor. Requires an oxidized flavin as cofactor.

The catalysed reaction is cyclohexa-1,5-diene-1-carbonyl-CoA + oxidized 2[4Fe-4S]-[ferredoxin] + 2 ADP + 2 phosphate = reduced 2[4Fe-4S]-[ferredoxin] + benzoyl-CoA + 2 ATP + 2 H2O. The enzyme catalyses 3-hydroxybenzoyl-CoA + AH2 + 2 ATP + 2 H2O = 3-hydroxycyclohexa-1,5-diene-1-carbonyl-CoA + A + 2 ADP + 2 phosphate + 2 H(+). Catalyzes the anaerobic reduction of benzoyl-CoA and 3-hydroxybenzoyl-CoA to form cyclohexa-1,5-diene-1-carbonyl-CoA and 3-hydroxycyclohexa-1,5-diene-1-carbonyl-CoA, respectively. The enzyme also reduces other benzoyl-CoA analogs with small substituents at the aromatic ring. The sequence is that of Benzoyl-CoA reductase subunit C (bcrC) from Thauera aromatica.